The following is a 286-amino-acid chain: 2-hydroxy-6-oxononadienedioate/2-hydroxy-6-oxononatrienedioate hydrolase (286 aa).

The AB hydrolase-1 domain occupies 36-271; sequence VIMLHGGGPG…RCGHWAQWEH (236 aa). Histidine 265 serves as the catalytic Proton acceptor.

This sequence belongs to the AB hydrolase superfamily. BphD family. Homodimer.

It carries out the reaction (2Z,4E)-2-hydroxy-6-oxonona-2,4-dienedioate + H2O = (2Z)-2-hydroxypenta-2,4-dienoate + succinate + H(+). The enzyme catalyses (2Z,4E,7E)-2-hydroxy-6-oxonona-2,4,7-trienedioate + H2O = (2Z)-2-hydroxypenta-2,4-dienoate + fumarate + H(+). It participates in aromatic compound metabolism; 3-phenylpropanoate degradation. Its function is as follows. Catalyzes the cleavage of the C5-C6 bond of 2-hydroxy-6-oxononadienedioate, and probably also 2-hydroxy-6-oxononatrienedioate, a dienol ring fission product of the bacterial meta-cleavage pathway for degradation of phenylpropionic acid. In Comamonas testosteroni (Pseudomonas testosteroni), this protein is 2-hydroxy-6-oxononadienedioate/2-hydroxy-6-oxononatrienedioate hydrolase (mhpC).